Here is a 198-residue protein sequence, read N- to C-terminus: Recombination protein RecR (198 aa).

The segment at 57-72 adopts a C4-type zinc-finger fold; sequence CSVCHNITDTDPCRIC. The Toprim domain occupies 80 to 175; sequence SVICVVQDAK…KVTRIAHGLP (96 aa).

Belongs to the RecR family.

Its function is as follows. May play a role in DNA repair. It seems to be involved in an RecBC-independent recombinational process of DNA repair. It may act with RecF and RecO. The chain is Recombination protein RecR from Halalkalibacterium halodurans (strain ATCC BAA-125 / DSM 18197 / FERM 7344 / JCM 9153 / C-125) (Bacillus halodurans).